The chain runs to 309 residues: Ribonuclease Z (309 aa).

Zn(2+) is bound by residues histidine 63, histidine 65, aspartate 67, histidine 68, histidine 145, aspartate 216, and histidine 274. The Proton acceptor role is filled by aspartate 67.

It belongs to the RNase Z family. Homodimer. Zn(2+) is required as a cofactor.

The catalysed reaction is Endonucleolytic cleavage of RNA, removing extra 3' nucleotides from tRNA precursor, generating 3' termini of tRNAs. A 3'-hydroxy group is left at the tRNA terminus and a 5'-phosphoryl group is left at the trailer molecule.. In terms of biological role, zinc phosphodiesterase, which displays some tRNA 3'-processing endonuclease activity. Probably involved in tRNA maturation, by removing a 3'-trailer from precursor tRNA. The protein is Ribonuclease Z of Streptococcus agalactiae serotype V (strain ATCC BAA-611 / 2603 V/R).